A 324-amino-acid chain; its full sequence is Methyltransferase pytC (324 aa).

Belongs to the methyltransferase superfamily. LaeA methyltransferase family.

It functions in the pathway secondary metabolite biosynthesis. Its function is as follows. Methyltransferase; part of the gene cluster that mediates the biosynthesis of pyranterreones, a family of antioxidative compounds. The first step of pyranonigrins biosynthesis is performed by the hybrid PKS-NRPS synthetase pytA that condenses 4 malonyl-CoA units ato the acetyl starter unit by the modular PKS of pytA. The acyl chain is then connected to an L-serine through the amide bond by the modular NRPS of pytA. A tetramic acid is formed and released from the PKS-NRPS pytA to give pyranterreone 5 with the help of the thioesterase pytI. Pyranterreone 5 could be methylated by pytC to afford pyranterreone 6. Both pyranterreones 5 and 6 are subsequently oxidized by the FAD-linked oxidoreductase pytB and the cytochrome P450 monooxygenase pytD to form the fused gamma-pyrone core, resulting in pyranterreones 7 and 11, respectively. The hydroxy group at C-8 of pyranterreones 7 and 11 are dehydrated by the aspartyl protease pytH to form a delta-7 double bond to give pyranterreones 3 and 1, 2 accordingly. The exo-methylene of pyranterreone 3 could be reduced into a pendant methyl by reductase pytE to provide pyranterreone 4, also known as cordylactam. Pyranterreone 4 can be reconverted to pyranterreone 3 through pytB-catalyzed dehydrogenation or further oxidized to pyranterreones 9 and 10. The sequence is that of Methyltransferase pytC from Aspergillus terreus (strain NIH 2624 / FGSC A1156).